We begin with the raw amino-acid sequence, 158 residues long: NAD(P)H-quinone oxidoreductase subunit N (158 aa).

The protein belongs to the complex I NdhN subunit family. NDH-1 can be composed of about 15 different subunits; different subcomplexes with different compositions have been identified which probably have different functions.

The protein resides in the cellular thylakoid membrane. The enzyme catalyses a plastoquinone + NADH + (n+1) H(+)(in) = a plastoquinol + NAD(+) + n H(+)(out). It carries out the reaction a plastoquinone + NADPH + (n+1) H(+)(in) = a plastoquinol + NADP(+) + n H(+)(out). Functionally, NDH-1 shuttles electrons from an unknown electron donor, via FMN and iron-sulfur (Fe-S) centers, to quinones in the respiratory and/or the photosynthetic chain. The immediate electron acceptor for the enzyme in this species is believed to be plastoquinone. Couples the redox reaction to proton translocation, and thus conserves the redox energy in a proton gradient. Cyanobacterial NDH-1 also plays a role in inorganic carbon-concentration. This is NAD(P)H-quinone oxidoreductase subunit N from Gloeothece citriformis (strain PCC 7424) (Cyanothece sp. (strain PCC 7424)).